We begin with the raw amino-acid sequence, 313 residues long: Porphobilinogen deaminase (313 aa).

S-(dipyrrolylmethanemethyl)cysteine is present on cysteine 242.

Belongs to the HMBS family. Monomer. Requires dipyrromethane as cofactor.

It carries out the reaction 4 porphobilinogen + H2O = hydroxymethylbilane + 4 NH4(+). The protein operates within porphyrin-containing compound metabolism; protoporphyrin-IX biosynthesis; coproporphyrinogen-III from 5-aminolevulinate: step 2/4. Functionally, tetrapolymerization of the monopyrrole PBG into the hydroxymethylbilane pre-uroporphyrinogen in several discrete steps. This chain is Porphobilinogen deaminase, found in Yersinia pseudotuberculosis serotype O:1b (strain IP 31758).